The sequence spans 772 residues: METTLAKTPEKRQVVFLAILLLLWEAGSEAIRYSIPEETESGYLVAHLAKDLGFRVGELATRRARIHHRGNKELLQLDVETGNLLLKEKPDREALCGATEPCVLHFQIILENPVQFFQTELQLTDINDHSPEFPDTEMLLKIQESTQPATVFLLKAAQDSDIGSNAVQNYTVSPNLHFHVVTLSRSDGRKYPELVLDRALDREEQPELTLILTALDGGAPPKSGTTTVRIEVVDINDNAPEFVQSLYSVEVPENSPLDALVVTVSARDLDAGIHGNVAYSLFQGGGGPQPFVIDEITGEIRLKGALDFEATSYYTMEIVATDSGGLSGKCTVAIQVLDVNDNAPKLTISSLTSSIPENAPEAVVAVFSVSDPDSGDNGRMVCSIQNELPFLLKPTFENYYTLAAEGPLDREIREEYNITIIVSDLGTPRLTTQHTITVQVVDINDNAPAFTQTSYTMFVHENNNPALHIGTISATDSDSGSNAHITYSLLPPHDLQLSLASLVSINADNGQLFALRAMDYEALQAFEFHVVARDGGSPALSSQALVRVVVLDDNDNAPFILYPMQNASAPCTELLPRAAEPGYLVTKVVAVDSDSGQNAWLSFQLLKATEPGLFSVWAHNGEVRTTRLLSERDVPKHRLLLLVKDNGEPPRSASVTLHVLLVDGFSQPYLPLPEVQHDSSQDEDMLTLYLVIALASVSSLFLLSVLLFVGVRLCRRVREASLGACSVPEGHFSGHLVDVSGMGTLSQSYQYEVCLSGDSGTTDFKFLNHYSQ.

Positions Met1–Ser28 are cleaved as a signal peptide. 5 Cadherin domains span residues Ile31–Phe133, Pro134–Phe242, Val243–Leu346, Thr347–Phe450, and Thr451–Ile560. The Extracellular portion of the chain corresponds to Ile31–Leu690. The cysteines at positions 96 and 102 are disulfide-linked. An N-linked (GlcNAc...) asparagine glycan is attached at Asn169. Residue Ser223 is glycosylated (O-linked (Man) serine). The O-linked (Man) threonine glycan is linked to Thr225. Residue Asn417 is glycosylated (N-linked (GlcNAc...) asparagine). Residue Asn566 is glycosylated (N-linked (GlcNAc...) asparagine). The Cadherin 6 domain maps to Leu575 to Val675. A helical membrane pass occupies residues Val691–Val711. Residues Arg712–Gln772 are Cytoplasmic-facing.

As to quaternary structure, forms homodimers in trans (molecules expressed by two different cells). Forms promiscuous heterodimers in cis (at the plasma membrane of the same cell) with other protocadherins.

It localises to the cell membrane. Functionally, calcium-dependent cell-adhesion protein involved in cells self-recognition and non-self discrimination. Thereby, it is involved in the establishment and maintenance of specific neuronal connections in the brain. This Mus musculus (Mouse) protein is Protocadherin beta-6.